We begin with the raw amino-acid sequence, 536 residues long: Caspase recruitment domain-containing protein 9 (536 aa).

Ser-2 is subject to Phosphoserine. Positions 3, 10, and 73 each coordinate Zn(2+). One can recognise a CARD domain in the interval 6–98; it reads NDDECWSVLE…QLYKKVTGKE (93 aa). The tract at residues 99–116 is linker; sequence PARVFSMIIDASGESGLT. 2 coiled-coil regions span residues 117-277 and 332-419; these read QLLM…DRSS and LRKD…QQLE. A Glycyl lysine isopeptide (Lys-Gly) (interchain with G-Cter in ubiquitin) cross-link involves residue Lys-125. A Phosphothreonine modification is found at Thr-231. Position 277 is a phosphoserine (Ser-277). Phosphoserine occurs at positions 424, 425, 431, 450, 460, 483, and 498. Residues 427 to 536 form a disordered region; the sequence is LEDGSPRRSQ…GSDNTDTEGS (110 aa). Basic and acidic residues predominate over residues 487–502; that stretch reads PPEKERRRLKESFENY. Residues 503 to 513 show a composition bias toward basic residues; sequence RRKRALRKMQK. Residues Thr-531 and Thr-533 each carry the phosphothreonine; by CK2 modification.

As to quaternary structure, monomer. Homodimer; homodimerization is mediated by the CARD domain which forms an extensive interaction with the adjacent linker and coiled-coil regions; leads to an autoinhibited state. Homomultimer; polymerizes following activation, forming a nucleating helical template that seeds BCL10-filament formation via a CARD-CARD interaction. Interacts (via CARD domain) with BCL10 (via CARD domain); interaction takes place following CARD9 activation and polymerization, leading to the formation of a filamentous CBM complex assembly. Component of a CBM complex (CARD9-BCL10, MALT1), composed of CARD9, BCL10 and MALT1. Interacts with RASGRF1. Interacts with NOD2 (via NACHT domain); interaction is direct. Interacts with RIPK2. Interacts with VHL; without leading to protein degradation. Phosphorylated at Thr-231 by PRKCD downstream of C-type lectin receptors activation: phosphorylation promotes interaction with BCL10, followed by activation of NF-kappa-B and MAP kinase p38 pathways. Phosphorylated at Thr-531 and Thr-533 by CK2 following interaction with VHL, leading to inhibit the ability to activate NF-kappa-B. Post-translationally, ubiquitinated at Lys-125 via 'Lys-27'-linked ubiquitin by TRIM62 downstream of C-type lectin receptors activation; leading to CARD9 activation, followed by activation of NF-kappa-B and MAP kinase p38 pathways. Deubiquitinated at Lys-125 by USP15, inhibiting CARD9. As to expression, expression is restricted to several populations of phagocytes, such as macrophages, monocytes, and dendritic cells. Highly expressed in spleen. Also detected in liver, placenta, lung, peripheral blood leukocytes and in brain.

It is found in the cytoplasm. With respect to regulation, maintained in an autoinhibited state via homodimerization in which the CARD domain forms an extensive interaction with the adjacent linker and coiled-coil regions. Activation downstream of C-type lectin receptors, by phosphorylation by PRKCD and/or ubiquitination by TRIM62, triggers disruption of the CARD domain-coiled coil interface, CARD9 homooligomerization and BCL10 recruitment, followed by activation of NF-kappa-B and MAP kinase p38 pathways. Zinc-binding inhibits activation by stabilizing the CARD ground-state conformation and restricting its capacity to form BCL10-nucleating filaments. Adapter protein that plays a key role in innate immune response against fungi by forming signaling complexes downstream of C-type lectin receptors. CARD9-mediated signals are essential for antifungal immunity against a subset of fungi from the phylum Ascomycota. Transduces signals in myeloid cells downstream of C-type lectin receptors CLEC7A (dectin-1), CLEC6A (dectin-2) and CLEC4E (Mincle), which detect pathogen-associated molecular pattern metabolites (PAMPs), such as fungal carbohydrates, and trigger CARD9 activation. Upon activation, CARD9 homooligomerizes to form a nucleating helical template that recruits BCL10 via CARD-CARD interaction, thereby promoting polymerization of BCL10 and subsequent recruitment of MALT1: this leads to activation of NF-kappa-B and MAP kinase p38 (MAPK11, MAPK12, MAPK13 and/or MAPK14) pathways which stimulate expression of genes encoding pro-inflammatory cytokines and chemokines. CARD9 signaling in antigen-presenting cells links innate sensing of fungi to the activation of adaptive immunity and provides a cytokine milieu that induces the development and subsequent of interleukin 17-producing T helper (Th17) cells. Also involved in activation of myeloid cells via classical ITAM-associated receptors and TLR: required for TLR-mediated activation of MAPK, while it is not required for TLR-induced activation of NF-kappa-B. CARD9 can also be engaged independently of BCL10: forms a complex with RASGRF1 downstream of C-type lectin receptors, which recruits and activates HRAS, leading to ERK activation and the production of cytokines. Acts as an important regulator of the intestinal commensal fungi (mycobiota) component of the gut microbiota. Plays an essential role in antifungal immunity against dissemination of gut fungi: acts by promoting induction of antifungal IgG antibodies response in CX3CR1(+) macrophages to confer protection against disseminated C.albicans or C.auris infection. Also mediates immunity against other pathogens, such as certain bacteria, viruses and parasites; CARD9 signaling is however redundant with other innate immune responses. In response to L.monocytogenes infection, required for the production of inflammatory cytokines activated by intracellular peptidoglycan: acts by connecting NOD2 recognition of peptidoglycan to downstream activation of MAP kinases (MAPK) without activating NF-kappa-B. This Homo sapiens (Human) protein is Caspase recruitment domain-containing protein 9.